Here is a 331-residue protein sequence, read N- to C-terminus: Ferredoxin--NADP reductase 2 (331 aa).

7 residues coordinate FAD: Glu37, Gln45, Tyr50, Val90, Phe124, Asp286, and Thr327.

Belongs to the ferredoxin--NADP reductase type 2 family. Homodimer. FAD serves as cofactor.

It catalyses the reaction 2 reduced [2Fe-2S]-[ferredoxin] + NADP(+) + H(+) = 2 oxidized [2Fe-2S]-[ferredoxin] + NADPH. The chain is Ferredoxin--NADP reductase 2 from Listeria welshimeri serovar 6b (strain ATCC 35897 / DSM 20650 / CCUG 15529 / CIP 8149 / NCTC 11857 / SLCC 5334 / V8).